Reading from the N-terminus, the 189-residue chain is UPF0301 protein bbp_491 (189 aa).

This sequence belongs to the UPF0301 (AlgH) family.

In Buchnera aphidicola subsp. Baizongia pistaciae (strain Bp), this protein is UPF0301 protein bbp_491.